The primary structure comprises 95 residues: MAFKFNAEVRTAQGKGASRRLRHNGQIPAIVYGGSEAPVSIVLNHDELNNAQVHDSFYSDVITLVIDGKEVAVKVQAMQRHPFKPKLVHIDFKRA.

The protein belongs to the bacterial ribosomal protein bL25 family. In terms of assembly, part of the 50S ribosomal subunit; part of the 5S rRNA/L5/L18/L25 subcomplex. Contacts the 5S rRNA. Binds to the 5S rRNA independently of L5 and L18.

In terms of biological role, this is one of the proteins that binds to the 5S RNA in the ribosome where it forms part of the central protuberance. The sequence is that of Large ribosomal subunit protein bL25 from Actinobacillus succinogenes (strain ATCC 55618 / DSM 22257 / CCUG 43843 / 130Z).